A 3291-amino-acid chain; its full sequence is Protocadherin-16 (3291 aa).

The first 35 residues, 1–35 (MQKELSVALSCPGMKSLRTLLPLLVLLGATVPGSW), serve as a signal peptide directing secretion. Topologically, residues 36-2933 (GQAGSLDLQI…PDLNLLLVGA (2898 aa)) are extracellular. Cadherin domains follow at residues 37–137 (QAGS…APAF), 138–249 (PQAR…APAF), 250–356 (NQSR…QPSM), 369–466 (VSEA…APAF), 476–572 (LPEV…EPQF), 573–679 (QRTF…PPQF), 680–784 (YPRE…PPIF), 785–888 (EQLQ…SPAF), 889–994 (PAPE…APRF), 995–1105 (DSPT…EPTF), 1100–1205 (SEEP…SPTF), 1218–1317 (IQVP…SPDL), 1326–1429 (VPVV…APTF), 1430–1539 (ARDP…APVF), 1539–1642 (FASP…APAF), 1643–1744 (PQQE…TPTF), 1745–1848 (GNTH…APVF), 1849–1953 (PVPS…APAF), 1976–2061 (LATL…GPRF), 2062–2164 (PRTS…APRF), 2165–2270 (LRPH…RPTI), 2270–2369 (IPQP…VPTF), 2370–2475 (SQSL…APSF), 2476–2595 (TLPH…PPVF), 2596–2699 (TRAS…GPAF), 2700–2806 (PLSL…DPVF), and 2807–2926 (LAPS…APDL). N-linked (GlcNAc...) asparagine glycosylation is present at asparagine 396. Asparagine 2354 carries N-linked (GlcNAc...) asparagine glycosylation. The disordered stretch occupies residues 2867–2886 (SRAPGSGTTTSGGGGRTRRE). The chain crosses the membrane as a helical span at residues 2934–2954 (VAASLGVVVVLALAALVLGLV). Residues 2955-3291 (RARSRKAEAA…EPPDDTELRI (337 aa)) lie on the Cytoplasmic side of the membrane. Positions 2978 to 3033 (SLQKLGREPPSPPPSEHLYHQTLPSYGGPGAGGPYPRGGSLDPSHSSGRGSAEAAE) are disordered. Residues 3004–3013 (GGPGAGGPYP) show a composition bias toward gly residues. The residue at position 3048 (serine 3048) is a Phosphoserine. 2 disordered regions span residues 3051 to 3081 (SSLA…APDT) and 3226 to 3291 (ASHR…ELRI). Low complexity predominate over residues 3237 to 3259 (SLSSAAMSPSFSPSLSPLAARSP). The segment covering 3270-3279 (PSASALSTES) has biased composition (polar residues).

Heterophilic interaction with FAT4; this interaction affects their respective protein levels. Expressed in the epicardium and atrioventricular sulcus (at protein level).

Its subcellular location is the cell membrane. Its function is as follows. Calcium-dependent cell-adhesion protein. Mediates functions in neuroprogenitor cell proliferation and differentiation. In the heart, has a critical role for proper morphogenesis of the mitral valve, acting in the regulation of cell migration involved in valve formation. This Mus musculus (Mouse) protein is Protocadherin-16 (Dchs1).